Consider the following 189-residue polypeptide: Flavin prenyltransferase UbiX (189 aa).

FMN-binding positions include 10-12 (GAS), S37, 88-91 (SIKT), and R123. Dimethylallyl phosphate contacts are provided by Y153 and R169.

Belongs to the UbiX/PAD1 family.

The catalysed reaction is dimethylallyl phosphate + FMNH2 = prenylated FMNH2 + phosphate. Its pathway is cofactor biosynthesis; ubiquinone biosynthesis. Functionally, flavin prenyltransferase that catalyzes the synthesis of the prenylated FMN cofactor (prenyl-FMN) for 4-hydroxy-3-polyprenylbenzoic acid decarboxylase UbiD. The prenyltransferase is metal-independent and links a dimethylallyl moiety from dimethylallyl monophosphate (DMAP) to the flavin N5 and C6 atoms of FMN. The chain is Flavin prenyltransferase UbiX from Salmonella typhi.